Reading from the N-terminus, the 1296-residue chain is Phosphoribosylformylglycinamidine synthase (1296 aa).

The tract at residues 304-323 (WPGAATGSGGEIRDEGATGR) is disordered. ATP-binding positions include 306 to 317 (GAATGSGGEIRD) and A677. Residues D678, E717, N721, and D885 each coordinate Mg(2+). S887 is a binding site for ATP. A compositionally biased stretch (basic and acidic residues) spans 1000–1013 (PDCADQEHQAKQDE). Residues 1000 to 1019 (PDCADQEHQAKQDESDPGLN) form a disordered region. The 254-residue stretch at 1043-1296 (VAVLREQGVN…MFRNARKQLG (254 aa)) folds into the Glutamine amidotransferase type-1 domain. Residue C1136 is the Nucleophile of the active site. Active-site residues include H1261 and E1263.

The protein in the N-terminal section; belongs to the FGAMS family. As to quaternary structure, monomer.

It is found in the cytoplasm. It carries out the reaction N(2)-formyl-N(1)-(5-phospho-beta-D-ribosyl)glycinamide + L-glutamine + ATP + H2O = 2-formamido-N(1)-(5-O-phospho-beta-D-ribosyl)acetamidine + L-glutamate + ADP + phosphate + H(+). It functions in the pathway purine metabolism; IMP biosynthesis via de novo pathway; 5-amino-1-(5-phospho-D-ribosyl)imidazole from N(2)-formyl-N(1)-(5-phospho-D-ribosyl)glycinamide: step 1/2. Its function is as follows. Phosphoribosylformylglycinamidine synthase involved in the purines biosynthetic pathway. Catalyzes the ATP-dependent conversion of formylglycinamide ribonucleotide (FGAR) and glutamine to yield formylglycinamidine ribonucleotide (FGAM) and glutamate. This Yersinia pestis bv. Antiqua (strain Nepal516) protein is Phosphoribosylformylglycinamidine synthase.